The primary structure comprises 206 residues: Large ribosomal subunit protein uL4 (206 aa).

Residues 45-75 (RQGTHSTKTRGEVRGGGRKPWRQKGTGRARQ) form a disordered region. A compositionally biased stretch (basic residues) spans 60 to 71 (GGRKPWRQKGTG).

The protein belongs to the universal ribosomal protein uL4 family. As to quaternary structure, part of the 50S ribosomal subunit.

In terms of biological role, one of the primary rRNA binding proteins, this protein initially binds near the 5'-end of the 23S rRNA. It is important during the early stages of 50S assembly. It makes multiple contacts with different domains of the 23S rRNA in the assembled 50S subunit and ribosome. Functionally, forms part of the polypeptide exit tunnel. The chain is Large ribosomal subunit protein uL4 from Thermoanaerobacter pseudethanolicus (strain ATCC 33223 / 39E) (Clostridium thermohydrosulfuricum).